The primary structure comprises 153 residues: Lectin-like protein EP153R (153 aa).

Topologically, residues 1–30 are cytoplasmic; it reads MYFKKKYIGLIDKNCEKKILDDSSTIKICY. The helical transmembrane segment at 31 to 51 threads the bilayer; the sequence is ILIGILIGTNMITLIYNFIFW. The Extracellular segment spans residues 52–153; sequence DNYIKCYRNN…YTDLLFICGK (102 aa). Cys67 and Cys78 form a disulfide bridge. N-linked (GlcNAc...) asparagine; by host glycans are attached at residues Asn83, Asn89, Asn101, Asn107, Asn113, Asn120, Asn127, and Asn143. Cys97 and Cys151 are oxidised to a cystine.

This sequence belongs to the asfivirus lectin-like protein family. In terms of assembly, homodimer.

Its subcellular location is the host endoplasmic reticulum membrane. In terms of biological role, down-regulates MHC-I expression by impairing the appropriate configuration or presentation into the plasma membrane of the latter. Participates in viral hemadsorption, which may help viral spread. Reduces the transactivating activity of host TP53, thus inhibiting apoptosis. Non-essential for virus growth in swine macrophage cell cultures. In African swine fever virus (strain Badajoz 1971 Vero-adapted) (Ba71V), this protein is Lectin-like protein EP153R.